The primary structure comprises 301 residues: Cardiolipin synthase (CMP-forming) (301 aa).

Residues 70 to 93 (SGAGKAAPRPAAGAGAAAEAPGGQ) form a disordered region. Positions 71–93 (GAGKAAPRPAAGAGAAAEAPGGQ) are enriched in low complexity. 5 consecutive transmembrane segments (helical) span residues 109 to 129 (IPNMLSMTRIGLAPVLGYLII), 133 to 153 (FNIALGVFALAGLTDLLDGFI), 190 to 212 (IPVPLTYMIISRDVMLIAAVFYV), 250 to 270 (LILVAASLAAPVFNYADSIYL), and 272 to 292 (ILWCFTAFTTAASAYSYYHYG).

It belongs to the CDP-alcohol phosphatidyltransferase class-I family. Requires a divalent metal cation as cofactor. In terms of tissue distribution, highly expressed in tissues such as heart, skeletal muscle and liver.

Its subcellular location is the mitochondrion inner membrane. It carries out the reaction a CDP-1,2-diacyl-sn-glycerol + a 1,2-diacyl-sn-glycero-3-phospho-(1'-sn-glycerol) = a cardiolipin + CMP + H(+). Its function is as follows. Catalyzes the synthesis of cardiolipin (CL) (diphosphatidylglycerol) by specifically transferring a phosphatidyl group from CDP-diacylglycerol to phosphatidylglycerol (PG). CL is a key phospholipid in mitochondrial membranes and plays important roles in maintaining the functional integrity and dynamics of mitochondria under both optimal and stress conditions. This Homo sapiens (Human) protein is Cardiolipin synthase (CMP-forming) (CRLS1).